The chain runs to 205 residues: HTH-type transcriptional regulator PksA (205 aa).

In terms of domain architecture, HTH tetR-type spans 8–68 (EKRRKQIAEA…FAMKLVQEKV (61 aa)). Residues 31–50 (SARNIAKEAGLSLGALRHYF) constitute a DNA-binding region (H-T-H motif).

Functionally, transcriptional regulation of the polyketide synthase operon. This chain is HTH-type transcriptional regulator PksA (pksA), found in Bacillus subtilis (strain 168).